The chain runs to 467 residues: MKHIVKHIHFVGIGGVGMSGIAEVLVNLGYQVSGSDLTSNAITDRLAALGARIAIGHAAENIEGANAVVVSTAVRSDNPEVLAARHRRIPIVPRAVMLAELMRLKQGIAIAGTHGKTTTTSLVASVLAAGGLDPTFVIGGRLISAGANARLGTGDFIVAEADESDASFLNLFPVIEVITNIDADHMDTYGHDFARLKQAFIEFTHRLPFYGIAVLCVDDPNVKEILPFVSKPIIRYGFAPDAQVRAVNVKAHDGKMHFTAMREDAAPIDIVLNLPGEHNVQNALAAIAIATELEVKDADIQRALADFNGVGRRFQRYGEVPVVSEGKASGAYTLVDDYGHHPVEMAATVAAARGAFPGRRLVLAFQPHRFTRTRDCFEDFVKVLSTVDALVLTEVYSAGESPIVAADGRALARALRVAGKVEPVFVDTVDEVPDALSAVVRDGDVVITMGAGSIGGVPGRLAQETKV.

112–118 (GTHGKTT) provides a ligand contact to ATP.

It belongs to the MurCDEF family.

The protein resides in the cytoplasm. The enzyme catalyses UDP-N-acetyl-alpha-D-muramate + L-alanine + ATP = UDP-N-acetyl-alpha-D-muramoyl-L-alanine + ADP + phosphate + H(+). It participates in cell wall biogenesis; peptidoglycan biosynthesis. Its function is as follows. Cell wall formation. The sequence is that of UDP-N-acetylmuramate--L-alanine ligase from Paraburkholderia phytofirmans (strain DSM 17436 / LMG 22146 / PsJN) (Burkholderia phytofirmans).